A 224-amino-acid polypeptide reads, in one-letter code: Phosphoribosylformylglycinamidine synthase subunit PurQ (224 aa).

In terms of domain architecture, Glutamine amidotransferase type-1 spans 4-224 (FGIIVFPGSN…ATDGLAMFIS (221 aa)). Cys87 serves as the catalytic Nucleophile. Residues His204 and Glu206 contribute to the active site.

As to quaternary structure, part of the FGAM synthase complex composed of 1 PurL, 1 PurQ and 2 PurS subunits.

The protein resides in the cytoplasm. It carries out the reaction N(2)-formyl-N(1)-(5-phospho-beta-D-ribosyl)glycinamide + L-glutamine + ATP + H2O = 2-formamido-N(1)-(5-O-phospho-beta-D-ribosyl)acetamidine + L-glutamate + ADP + phosphate + H(+). The enzyme catalyses L-glutamine + H2O = L-glutamate + NH4(+). The protein operates within purine metabolism; IMP biosynthesis via de novo pathway; 5-amino-1-(5-phospho-D-ribosyl)imidazole from N(2)-formyl-N(1)-(5-phospho-D-ribosyl)glycinamide: step 1/2. Part of the phosphoribosylformylglycinamidine synthase complex involved in the purines biosynthetic pathway. Catalyzes the ATP-dependent conversion of formylglycinamide ribonucleotide (FGAR) and glutamine to yield formylglycinamidine ribonucleotide (FGAM) and glutamate. The FGAM synthase complex is composed of three subunits. PurQ produces an ammonia molecule by converting glutamine to glutamate. PurL transfers the ammonia molecule to FGAR to form FGAM in an ATP-dependent manner. PurS interacts with PurQ and PurL and is thought to assist in the transfer of the ammonia molecule from PurQ to PurL. This chain is Phosphoribosylformylglycinamidine synthase subunit PurQ, found in Synechocystis sp. (strain ATCC 27184 / PCC 6803 / Kazusa).